The primary structure comprises 220 residues: Deoxyribose-phosphate aldolase (220 aa).

Residue Asp89 is the Proton donor/acceptor of the active site. Catalysis depends on Lys151, which acts as the Schiff-base intermediate with acetaldehyde. Lys180 serves as the catalytic Proton donor/acceptor.

Belongs to the DeoC/FbaB aldolase family. DeoC type 1 subfamily.

It is found in the cytoplasm. The catalysed reaction is 2-deoxy-D-ribose 5-phosphate = D-glyceraldehyde 3-phosphate + acetaldehyde. The protein operates within carbohydrate degradation; 2-deoxy-D-ribose 1-phosphate degradation; D-glyceraldehyde 3-phosphate and acetaldehyde from 2-deoxy-alpha-D-ribose 1-phosphate: step 2/2. In terms of biological role, catalyzes a reversible aldol reaction between acetaldehyde and D-glyceraldehyde 3-phosphate to generate 2-deoxy-D-ribose 5-phosphate. This is Deoxyribose-phosphate aldolase from Streptococcus pneumoniae (strain CGSP14).